A 269-amino-acid polypeptide reads, in one-letter code: NAD-capped RNA hydrolase NudC (269 aa).

R74 is a binding site for substrate. Residues C103, C106, C121, and C124 each coordinate Zn(2+). A substrate-binding site is contributed by Y129. The 124-residue stretch at 130 to 253 (PRIFPCIIVA…TIARQLIENT (124 aa)) folds into the Nudix hydrolase domain. 3 residues coordinate a divalent metal cation: A163, E179, and E183. Positions 164 to 185 (GFLEVGETLEQCVAREVKEETG) match the Nudix box motif. A substrate-binding site is contributed by 197–204 (QPWAFPSS). E224 contacts a divalent metal cation. Residue A246 coordinates substrate.

This sequence belongs to the Nudix hydrolase family. NudC subfamily. Homodimer. Mg(2+) is required as a cofactor. It depends on Mn(2+) as a cofactor. Requires Zn(2+) as cofactor.

It carries out the reaction a 5'-end NAD(+)-phospho-ribonucleoside in mRNA + H2O = a 5'-end phospho-adenosine-phospho-ribonucleoside in mRNA + beta-nicotinamide D-ribonucleotide + 2 H(+). The enzyme catalyses NAD(+) + H2O = beta-nicotinamide D-ribonucleotide + AMP + 2 H(+). The catalysed reaction is NADH + H2O = reduced beta-nicotinamide D-ribonucleotide + AMP + 2 H(+). Its function is as follows. mRNA decapping enzyme that specifically removes the nicotinamide adenine dinucleotide (NAD) cap from a subset of mRNAs by hydrolyzing the diphosphate linkage to produce nicotinamide mononucleotide (NMN) and 5' monophosphate mRNA. The NAD-cap is present at the 5'-end of some mRNAs and stabilizes RNA against 5'-processing. Has preference for mRNAs with a 5'-end purine. Catalyzes the hydrolysis of a broad range of dinucleotide pyrophosphates. This chain is NAD-capped RNA hydrolase NudC, found in Vibrio atlanticus (strain LGP32) (Vibrio splendidus (strain Mel32)).